Reading from the N-terminus, the 605-residue chain is 9-cis-epoxycarotenoid dioxygenase NCED1, chloroplastic (605 aa).

The transit peptide at 1–16 (MATTTSHATNTWIKTK) directs the protein to the chloroplast. The segment at 55-89 (ILHFPKQSSNYQTPKNNTISHPKQENNNSSSSSTS) is disordered. Polar residues predominate over residues 60 to 75 (KQSSNYQTPKNNTISH). Low complexity predominate over residues 80–89 (NNNSSSSSTS). Fe cation is bound by residues H302, H351, H416, and H592.

The protein belongs to the carotenoid oxygenase family. The cofactor is Fe(2+). In terms of tissue distribution, expressed in developing and ripening fruits. Highly expressed in pulp. Observed in unpollinated ovaries (e.g. ovules, placenta and pericarp). Expressed in flowers.

Its subcellular location is the plastid. The protein localises to the chloroplast stroma. The enzyme catalyses a 9-cis-epoxycarotenoid + O2 = a 12'-apo-carotenal + 2-cis,4-trans-xanthoxin. It carries out the reaction 9-cis-violaxanthin + O2 = (3S,5R,6S)-5,6-epoxy-3-hydroxy-5,6-dihydro-12'-apo-beta-caroten-12'-al + 2-cis,4-trans-xanthoxin. The catalysed reaction is 9'-cis-neoxanthin + O2 = (3S,5R,6R)-3,5-dihydroxy-6,7-didehydro-5,6-dihydro-12'-apo-beta-caroten-12'-al + 2-cis,4-trans-xanthoxin. Its pathway is plant hormone biosynthesis; abscisate biosynthesis. Its function is as follows. Has a 11,12(11',12') 9-cis epoxycarotenoid cleavage activity. Catalyzes the first step of abscisic-acid (ABA) biosynthesis from carotenoids. Required for ABA accumulation upon drought. Required for ABA-mediated regulation of anther/pollen development, including metabolism, cell wall modification and transcription level. Positive regulator of fruit ripening involved in the biosynthesis of abscisic acid (ABA); initiates ABA biosynthesis at the onset of fruit ripening. Modulates the degree of pigmentation and carotenoid composition as well as pectin catabolism during ripening and may regulate the ethylene production and action in climacteric tomato fruit. The chain is 9-cis-epoxycarotenoid dioxygenase NCED1, chloroplastic from Solanum lycopersicum (Tomato).